We begin with the raw amino-acid sequence, 349 residues long: Bifunctional nitrilase/nitrile hydratase NIT4A (349 aa).

The 273-residue stretch at 29–301 folds into the CN hydrolase domain; that stretch reads VRATVVQAST…EALISADLDL (273 aa). Catalysis depends on E69, which acts as the Proton acceptor. K156 serves as the catalytic Proton donor. Residue C190 is the Nucleophile of the active site.

It belongs to the carbon-nitrogen hydrolase superfamily. Nitrilase family. As to expression, expressed in roots, stems, cotyledons, leaves and flowers.

It is found in the cell membrane. It catalyses the reaction a nitrile + 2 H2O = a carboxylate + NH4(+). It carries out the reaction 3-cyano-L-alanine + 2 H2O = L-aspartate + NH4(+). The enzyme catalyses L-asparagine = 3-cyano-L-alanine + H2O. Functionally, highly specific for beta-cyano-L-alanine (Ala(CN)). Low activity with 3-phenylpropionitrile (PPN). Not associated with auxin production but may be involved in cyanide detoxification. This Nicotiana tabacum (Common tobacco) protein is Bifunctional nitrilase/nitrile hydratase NIT4A (NIT4A).